We begin with the raw amino-acid sequence, 359 residues long: Peptide chain release factor 1 (359 aa).

Position 235 is an N5-methylglutamine (Q235).

This sequence belongs to the prokaryotic/mitochondrial release factor family. Post-translationally, methylated by PrmC. Methylation increases the termination efficiency of RF1.

It is found in the cytoplasm. Its function is as follows. Peptide chain release factor 1 directs the termination of translation in response to the peptide chain termination codons UAG and UAA. This Polynucleobacter necessarius subsp. necessarius (strain STIR1) protein is Peptide chain release factor 1.